The sequence spans 217 residues: Protein-L-isoaspartate O-methyltransferase (217 aa).

The active site involves S67.

This sequence belongs to the methyltransferase superfamily. L-isoaspartyl/D-aspartyl protein methyltransferase family.

The protein resides in the cytoplasm. It carries out the reaction [protein]-L-isoaspartate + S-adenosyl-L-methionine = [protein]-L-isoaspartate alpha-methyl ester + S-adenosyl-L-homocysteine. Functionally, catalyzes the methyl esterification of L-isoaspartyl residues in peptides and proteins that result from spontaneous decomposition of normal L-aspartyl and L-asparaginyl residues. It plays a role in the repair and/or degradation of damaged proteins. The protein is Protein-L-isoaspartate O-methyltransferase of Azoarcus sp. (strain BH72).